Consider the following 422-residue polypeptide: E3 ubiquitin-protein ligase CBLL2 (422 aa).

The RING-type zinc finger occupies 54-94 (CDKCDLPIKIYGRIIPCKHAFCYNCANLYDKIGYKICPRCS). Residues 93-151 (CSYPVLRIEEHKRGSVFMCSVVQGCKRTYLSQKSLQAHIKRRHKRARKQVASASLEKLR) are HYB domain. The segment at 109 to 135 (FMCSVVQGCKRTYLSQKSLQAHIKRRH) adopts a C2H2-type zinc-finger fold. 2 disordered regions span residues 190–213 (MQQM…PELS) and 378–422 (QTDA…HRPY). Over residues 195 to 205 (HEQHNQPHKDL) the composition is skewed to basic and acidic residues. The span at 393–405 (LPPPPPTWSPPPS) shows a compositional bias: pro residues. Over residues 410 to 422 (GSHHSYQRRHRPY) the composition is skewed to basic residues.

As to quaternary structure, homodimer.

It localises to the cytoplasm. It catalyses the reaction S-ubiquitinyl-[E2 ubiquitin-conjugating enzyme]-L-cysteine + [acceptor protein]-L-lysine = [E2 ubiquitin-conjugating enzyme]-L-cysteine + N(6)-ubiquitinyl-[acceptor protein]-L-lysine.. The protein operates within protein modification; protein ubiquitination. Functionally, E3 ubiquitin ligase catalyzing the covalent attachment of ubiquitin moieties onto substrate proteins. May operate on tyrosine-phosphorylated SRC substrates. This chain is E3 ubiquitin-protein ligase CBLL2 (CBLL2), found in Macaca fascicularis (Crab-eating macaque).